The sequence spans 560 residues: Putative transport protein VSAL_I2029 (560 aa).

The next 5 helical transmembrane spans lie at 14 to 34 (ILLL…KIGS), 37 to 57 (LGSS…GYTF), 66 to 86 (FMLF…GIFL), 94 to 114 (LLVL…GYYF), and 161 to 181 (NLSV…ILLA). 2 consecutive RCK C-terminal domains span residues 203 to 292 (RGIG…FRNG) and 293 to 376 (KEVF…KIGF). The next 5 membrane-spanning stretches (helical) occupy residues 386 to 406 (LLAF…TMSF), 409 to 429 (VTFG…LGFL), 451 to 471 (GLLV…IEYF), 478 to 498 (VLAA…LVGA), and 539 to 559 (AGTY…MILL).

The protein belongs to the AAE transporter (TC 2.A.81) family. YbjL subfamily.

The protein localises to the cell membrane. This chain is Putative transport protein VSAL_I2029, found in Aliivibrio salmonicida (strain LFI1238) (Vibrio salmonicida (strain LFI1238)).